Here is a 464-residue protein sequence, read N- to C-terminus: L-cystine uptake protein TcyP (464 aa).

Transmembrane regions (helical) follow at residues 3–23, 34–54, 73–93, 107–127, 184–204, 225–245, 263–283, 347–367, 371–391, and 395–415; these read TLLVGINVAVMLILVGVLYYM, VFTALGVGIIFGLILQFIYEP, YVKLLQMIVMPLILVSIISAF, GLIIGILILTTGIAAAVGIAA, PTSTISVVIFAAFIGIAFIGV, IVMRMVTLILRLTPYGVLALM, FVLASYVALIVMFVIHLLLIA, AGIYPAMLAMMVAPTVGIDPL, FILTLIAVVAISSFGVAGVGG, and FAALIVLSTMNLPIGIVALVI.

This sequence belongs to the dicarboxylate/amino acid:cation symporter (DAACS) (TC 2.A.23) family.

It is found in the membrane. Its function is as follows. Mediates uptake of L-cystine, the oxidized form of L-cysteine. This chain is L-cystine uptake protein TcyP, found in Bacillus cereus (strain ATCC 10987 / NRS 248).